Consider the following 387-residue polypeptide: Early growth response protein 3 (387 aa).

Positions 241-283 are disordered; that stretch reads PGFGSLPQPPLTLKPIRPRKYPNRPSKTPLHERPHACPAEGCD. Over residues 269–283 the composition is skewed to basic and acidic residues; the sequence is PLHERPHACPAEGCD. 3 C2H2-type zinc fingers span residues 275-299, 305-327, and 333-355; these read HACP…LRIH, FQCR…IRTH, and FACE…AKIH. The interval 348–387 is disordered; the sequence is RKRHAKIHLKQKEKKAEKGGAPSASSAPPVSLAPVVTTCA. Positions 350 to 360 are enriched in basic residues; the sequence is RHAKIHLKQKE. Over residues 368 to 387 the composition is skewed to low complexity; sequence APSASSAPPVSLAPVVTTCA.

The protein belongs to the EGR C2H2-type zinc-finger protein family.

Its subcellular location is the nucleus. Functionally, probable transcription factor involved in muscle spindle development. The protein is Early growth response protein 3 (EGR3) of Homo sapiens (Human).